Consider the following 475-residue polypeptide: Cobyric acid synthase (475 aa).

The region spanning 244–431 (KLNVVVPVLT…LHGFFDEADV (188 aa)) is the GATase cobBQ-type domain. Cys-325 (nucleophile) is an active-site residue. Residue His-423 is part of the active site.

The protein belongs to the CobB/CobQ family. CobQ subfamily.

It participates in cofactor biosynthesis; adenosylcobalamin biosynthesis. Functionally, catalyzes amidations at positions B, D, E, and G on adenosylcobyrinic A,C-diamide. NH(2) groups are provided by glutamine, and one molecule of ATP is hydrogenolyzed for each amidation. This chain is Cobyric acid synthase, found in Vibrio campbellii (strain ATCC BAA-1116).